A 385-amino-acid polypeptide reads, in one-letter code: MSQREWIEKDYYKELGVSSTASQDEIKKAYRKLARDLHPDANPGDSKAEERFKAVSEAHAVLSDPAKRKEYDETRRLFAGGGYPRGGFGPGGAGGFSQGFDIGDIFGGTAAGDGGLGDILGGLFNRGGTRTTSRPRRGADVETETTLGFREAAQGVTVPLRMTSPSPCTTCHGSGAKPGTSPRVCPICNGTGVVSRNQGAFGFSEPCDGCRGTGSIIDDPCVDCHGSGIQNRTRTITVRIPPGVSDGQRIRLAGQGEAGLRGAPSGDLYVTVHVSQDKVFGRNGDDLTLVLPVSYAELVLGTTVSVPTLDGRVGVKVPPGTADGRTLRVRGRGVPKRGGGAGDLLVTVKVAVPQKLDDDALEALERYREAEKASGFDPRAGWAGA.

The J domain occupies Asp10–Arg75. The segment at Gly155–Thr233 adopts a CR-type zinc-finger fold. Zn(2+)-binding residues include Cys168, Cys171, Cys185, Cys188, Cys207, Cys210, Cys221, and Cys224. CXXCXGXG motif repeat units lie at residues Cys168–Gly175, Cys185–Gly192, Cys207–Gly214, and Cys221–Gly228.

The protein belongs to the DnaJ family. Homodimer. It depends on Zn(2+) as a cofactor.

Its subcellular location is the cytoplasm. Functionally, participates actively in the response to hyperosmotic and heat shock by preventing the aggregation of stress-denatured proteins and by disaggregating proteins, also in an autonomous, DnaK-independent fashion. Unfolded proteins bind initially to DnaJ; upon interaction with the DnaJ-bound protein, DnaK hydrolyzes its bound ATP, resulting in the formation of a stable complex. GrpE releases ADP from DnaK; ATP binding to DnaK triggers the release of the substrate protein, thus completing the reaction cycle. Several rounds of ATP-dependent interactions between DnaJ, DnaK and GrpE are required for fully efficient folding. Also involved, together with DnaK and GrpE, in the DNA replication of plasmids through activation of initiation proteins. The protein is Chaperone protein DnaJ 2 of Nocardia farcinica (strain IFM 10152).